Here is a 39-residue protein sequence, read N- to C-terminus: Fructose 5-dehydrogenase [NADP(+)] (39 aa).

The enzyme catalyses D-fructose + NADP(+) = 5-dehydro-D-fructose + NADPH + H(+). This is Fructose 5-dehydrogenase [NADP(+)] from Erwinia citreus.